The sequence spans 2123 residues: Toxin Afp18 (2123 aa).

The tract at residues 864–919 (FFDNSDQDADQPRVRRKREMTDEIMLSDGSSRSEAKALPDENELDTDQSKSRPESA) is disordered. Residues 1771-2123 (VFDSANTNRS…GNSTQSSGLS (353 aa)) form a tyrosine glycosyltransferase region. Residues 1850 to 1852 (IWV) and 1940 to 1941 (SD) contribute to the UDP-N-acetyl-alpha-D-glucosamine site. Residues Asp-1957 and Asp-1959 each coordinate a divalent metal cation. Positions 1957-1960 (DIDD) match the DxDD motif motif. Residue Asn-1993 coordinates UDP-N-acetyl-alpha-D-glucosamine.

A divalent metal cation serves as cofactor.

Its subcellular location is the secreted. The protein resides in the host cell membrane. It catalyses the reaction L-tyrosyl-[protein] + UDP-N-acetyl-alpha-D-glucosamine = O-(N-acetyl-alpha-D-glucosaminyl)-L-tyrosyl-[protein] + UDP + H(+). Its function is as follows. Toxin component of the prophage tail-derived protein translocation system Afp, which is the causative agent of enteric redmouth disease in salmonid fish species. Mono-O-GlcNAcylates the small GTPase RhoA in eukaryotic host cells at Tyr-34, using UDP-N-acetylglucosamine (UDP-GlcNAc) as the sugar donor. Glycosylation of RhoA results in impaired effector and regulator interaction and inactivation of downstream RhoA signaling which leads to actin filament depolymerization and blocks cytokinesis and gastrulation during zebrafish embryo development. To a lesser extent, is also able to glycosylate other Rho family GTPases (RhoB, RhoC, Rac1, Rac2, Rac3, and Cdc42) in vitro at a switch I tyrosine residue, but not Ras proteins. This chain is Toxin Afp18, found in Yersinia ruckeri serotype O1 (strain ATCC 29473 / DSM 18506 / JCM 15110 / CCUG 14190 / NCIMB 2194 / NCTC 12986 / 2396-61).